Consider the following 752-residue polypeptide: Sialidase 85-1.1 (752 aa).

An N-terminal signal peptide occupies residues 1–23 (MSRRVFASAVLLLIVVTMCCGGA). 2 BNR repeats span residues 274-285 (IYSKDNGSTWSL) and 319-330 (YVSRDMGTTWTE). The tract at residues 693–725 (APEPQVKIAPKPAAPAAPAGNEETARETGDGGA) is disordered. Positions 701-711 (APKPAAPAAPA) are enriched in low complexity.

It belongs to the glycosyl hydrolase 33 family.

The catalysed reaction is Hydrolysis of alpha-(2-&gt;3)-, alpha-(2-&gt;6)-, alpha-(2-&gt;8)- glycosidic linkages of terminal sialic acid residues in oligosaccharides, glycoproteins, glycolipids, colominic acid and synthetic substrates.. Developmentally regulated neuraminidase implicated in parasite invasion of cells. May contribute to the pathology during T.cruzi infection by cleaving sialic acid from cells of the immune system. The polypeptide is Sialidase 85-1.1 (SA85-1.1) (Trypanosoma cruzi).